A 310-amino-acid polypeptide reads, in one-letter code: Ribose-phosphate pyrophosphokinase (310 aa).

ATP is bound by residues 34 to 36 (DQE) and 93 to 94 (RQ). Mg(2+) is bound by residues histidine 127 and aspartate 167. Lysine 190 is an active-site residue. D-ribose 5-phosphate is bound by residues arginine 192, aspartate 216, and 220-224 (DSGGT).

Belongs to the ribose-phosphate pyrophosphokinase family. Class I subfamily. As to quaternary structure, homohexamer. Requires Mg(2+) as cofactor.

The protein resides in the cytoplasm. It carries out the reaction D-ribose 5-phosphate + ATP = 5-phospho-alpha-D-ribose 1-diphosphate + AMP + H(+). The protein operates within metabolic intermediate biosynthesis; 5-phospho-alpha-D-ribose 1-diphosphate biosynthesis; 5-phospho-alpha-D-ribose 1-diphosphate from D-ribose 5-phosphate (route I): step 1/1. Its function is as follows. Involved in the biosynthesis of the central metabolite phospho-alpha-D-ribosyl-1-pyrophosphate (PRPP) via the transfer of pyrophosphoryl group from ATP to 1-hydroxyl of ribose-5-phosphate (Rib-5-P). This chain is Ribose-phosphate pyrophosphokinase, found in Agrobacterium fabrum (strain C58 / ATCC 33970) (Agrobacterium tumefaciens (strain C58)).